The sequence spans 374 residues: UPF0754 membrane protein NWMN_1738 (374 aa).

2 consecutive transmembrane segments (helical) span residues 4-24 (LFIIIFMIVVGAIIGGITNVI) and 354-374 (SLGFILGGIIGFFQGLVAIFV).

This sequence belongs to the UPF0754 family.

The protein resides in the cell membrane. The polypeptide is UPF0754 membrane protein NWMN_1738 (Staphylococcus aureus (strain Newman)).